Reading from the N-terminus, the 233-residue chain is Small ribosomal subunit protein uS3 (233 aa).

The KH type-2 domain occupies 39–107 (VRTFLTKELK…PAQINISEVR (69 aa)).

This sequence belongs to the universal ribosomal protein uS3 family. In terms of assembly, part of the 30S ribosomal subunit. Forms a tight complex with proteins S10 and S14.

Its function is as follows. Binds the lower part of the 30S subunit head. Binds mRNA in the 70S ribosome, positioning it for translation. The chain is Small ribosomal subunit protein uS3 from Pseudoalteromonas translucida (strain TAC 125).